A 571-amino-acid polypeptide reads, in one-letter code: Coenzyme A biosynthesis protein 3 (571 aa).

Disordered regions lie at residues Met1–Asp72 and Ile100–Pro120. A compositionally biased stretch (polar residues) spans Ser8–Thr35. Residue Ser42 is modified to Phosphoserine. The span at Ile43 to Ser59 shows a compositional bias: basic and acidic residues. Positions Lys60–Asp72 are enriched in polar residues. Phosphoserine is present on residues Ser116, Ser121, and Ser124. Disordered regions lie at residues Ile140–Gln171 and Ile209–Lys244. Residues Lys146 to Gln171 are compositionally biased toward low complexity. At Ser264 the chain carries Phosphoserine. The segment at Arg507 to Val571 is disordered. The span at Gln516–Val571 shows a compositional bias: acidic residues.

The protein belongs to the HFCD (homooligomeric flavin containing Cys decarboxylase) superfamily. Component of the phosphopantothenoylcysteine decarboxylase (PPCDC) complex, a heterotrimer composed of CAB3, HAL3 and VHS3.

The protein localises to the cytoplasm. Its function is as follows. Component of the phosphopantothenoylcysteine decarboxylase (PPCDC) involved in the coenzyme A synthesis. The chain is Coenzyme A biosynthesis protein 3 (CAB3) from Saccharomyces cerevisiae (strain ATCC 204508 / S288c) (Baker's yeast).